The sequence spans 610 residues: Phosphomethylpyrimidine synthase (610 aa).

Residues Asn216, Met245, Tyr274, His310, 330–332 (SRG), 371–374 (DGLR), and Glu410 contribute to the substrate site. Zn(2+) is bound at residue His414. Substrate is bound at residue Tyr437. His478 contacts Zn(2+). The [4Fe-4S] cluster site is built by Cys558, Cys561, and Cys566.

Belongs to the ThiC family. As to quaternary structure, homodimer. The cofactor is [4Fe-4S] cluster.

It carries out the reaction 5-amino-1-(5-phospho-beta-D-ribosyl)imidazole + S-adenosyl-L-methionine = 4-amino-2-methyl-5-(phosphooxymethyl)pyrimidine + CO + 5'-deoxyadenosine + formate + L-methionine + 3 H(+). Its pathway is cofactor biosynthesis; thiamine diphosphate biosynthesis. In terms of biological role, catalyzes the synthesis of the hydroxymethylpyrimidine phosphate (HMP-P) moiety of thiamine from aminoimidazole ribotide (AIR) in a radical S-adenosyl-L-methionine (SAM)-dependent reaction. The sequence is that of Phosphomethylpyrimidine synthase from Allorhizobium ampelinum (strain ATCC BAA-846 / DSM 112012 / S4) (Agrobacterium vitis (strain S4)).